The chain runs to 186 residues: Crossover junction endodeoxyribonuclease RuvC (186 aa).

Residues D7, E67, and D140 contribute to the active site. Residues D7, E67, and D140 each coordinate Mg(2+).

The protein belongs to the RuvC family. As to quaternary structure, homodimer which binds Holliday junction (HJ) DNA. The HJ becomes 2-fold symmetrical on binding to RuvC with unstacked arms; it has a different conformation from HJ DNA in complex with RuvA. In the full resolvosome a probable DNA-RuvA(4)-RuvB(12)-RuvC(2) complex forms which resolves the HJ. It depends on Mg(2+) as a cofactor.

It localises to the cytoplasm. It carries out the reaction Endonucleolytic cleavage at a junction such as a reciprocal single-stranded crossover between two homologous DNA duplexes (Holliday junction).. Its function is as follows. The RuvA-RuvB-RuvC complex processes Holliday junction (HJ) DNA during genetic recombination and DNA repair. Endonuclease that resolves HJ intermediates. Cleaves cruciform DNA by making single-stranded nicks across the HJ at symmetrical positions within the homologous arms, yielding a 5'-phosphate and a 3'-hydroxyl group; requires a central core of homology in the junction. The consensus cleavage sequence is 5'-(A/T)TT(C/G)-3'. Cleavage occurs on the 3'-side of the TT dinucleotide at the point of strand exchange. HJ branch migration catalyzed by RuvA-RuvB allows RuvC to scan DNA until it finds its consensus sequence, where it cleaves and resolves the cruciform DNA. The protein is Crossover junction endodeoxyribonuclease RuvC of Chloroherpeton thalassium (strain ATCC 35110 / GB-78).